A 461-amino-acid polypeptide reads, in one-letter code: Histone acetyltransferase KAT5 (461 aa).

One can recognise a Tudor-knot domain in the interval 8-65; the sequence is IEGCRLPVLRRNQDNEDEWPLAEILSVKDISGRKLFYVHYIDFNKRLDEWVTHERLDL. The residue at position 52 (lysine 52) is an N6-acetyllysine. The segment at 70–168 is disordered; sequence FPKKEAKTPT…RMTGSLVSDR (99 aa). Phosphoserine is present on residues serine 86 and serine 90. A compositionally biased stretch (basic and acidic residues) spans 90 to 100; it reads SPEREVKRKVE. Lysine 96, lysine 98, lysine 135, and lysine 137 each carry N6-acetyllysine; by autocatalysis. Position 147 is a phosphoserine (serine 147). The region spanning 175–452 is the MYST-type HAT domain; sequence TRMKNIECIE…IDSKCLHFTP (278 aa). The C2HC MYST-type zinc-finger motif lies at 208 to 233; it reads LYLCEFCLKYGRSLKCLQRHLTKCDL. N6-acetyllysine; by autocatalysis is present on lysine 275. Residues 316–461 form an interaction with ATF2 region; sequence ACILTLPPYQ…PKDWSKRGKW (146 aa). Acetyl-CoA-binding positions include 318–320 and 325–331; these read ILT and QRRGYGK. Residue glutamate 351 is the Proton donor/acceptor of the active site. Serine 355 and serine 364 together coordinate acetyl-CoA. Residue lysine 378 forms a Glycyl lysine isopeptide (Lys-Gly) (interchain with G-Cter in SUMO1); alternate linkage. Lysine 378 participates in a covalent cross-link: Glycyl lysine isopeptide (Lys-Gly) (interchain with G-Cter in SUMO2); alternate. A Glycyl lysine isopeptide (Lys-Gly) (interchain with G-Cter in SUMO1) cross-link involves residue lysine 399.

It belongs to the MYST (SAS/MOZ) family. Component of the NuA4 histone acetyltransferase complex which contains the catalytic subunit KAT5/TIP60 and the subunits EP400, TRRAP/PAF400, BRD8/SMAP, EPC1, DMAP1/DNMAP1, RUVBL1/TIP49, RUVBL2, ING3, actin, ACTL6A/BAF53A, MORF4L1/MRG15, MORF4L2/MRGX, MRGBP, YEATS4/GAS41, VPS72/YL1 and MEAF6. KAT5/TIP60, EPC1, and ING3 together constitute a minimal HAT complex termed Piccolo NuA4. The NuA4 complex interacts with MYC. Interacts with ATM. Interacts with JADE1. Interacts with PLA2G4A/CPLA2, EDNRA and HDAC7. Interacts with the cytoplasmic tail of APP and APBB1/FE65. Interacts with TRIM24 and TRIM68. Forms a complex with SENP6 and UBE2I in response to UV irradiation. Identified in a complex with HINT1. Interacts with ATF2 and CUL3. Interacts with NR1D2 (via N-terminus). Component of a SWR1-like complex. Interacts with FOXP3. Interacts with ZBTB49. Interacts with SRF. Interacts with ATF3; promoting autoacetylation and deubiquitination by USP7. Interacts with EP300/p300; interaction promotes KAT5 autoacetylation. Interacts with PRKDC; interaction is impaired following KAT5 sumoylation. Interacts with GPR50. Post-translationally, phosphorylated on Ser-86 and Ser-90; enhanced during G2/M phase. The phosphorylated form has a higher activity. Phosphorylation at Ser-90 by CDK1 or CDK9 is a prerequisite for phosphorylation at Ser-86 by GSK3. Phosphorylation at Ser-86 by GSK3 (GSK3A or GSK3B) activates acetyltransferase and acyltransferase activities. Phosphorylation at Ser-90 by CDK9 promotes KAT5 recruitment to chromatin. Phosphorylation by VRK1 following DNA damage promotes KAT5 association with chromatin and histone acetyltransferase activity. In terms of processing, autoacetylated. Autoacetylation is required for histone acetyltransferase activity. Autoacetylation at Lys-275 is facilitated by interaction with EP300/p300: it prevents ubiquitination and subsequent degradation by the proteasome and promotes acetylation of target proteins. Deacetylated by HDAC3 and SIRT1. Deacetylation by HDAC3 promotes its ubiquitination and cytoplasmic localization. Sumoylated by UBE2I at Lys-378 and Lys-399, leading to increase of its histone acetyltransferase activity in UV-induced DNA damage response, as well as its translocation to nuclear bodies. Sumoylation with SUMO2 by PIAS4 at Lys-378 promotes repair of DNA double-strand breaks (DSBs) via homologous recombination (HR). Sumoylation by PIAS4 impairs interaction with PRKDC, inhibiting non-homologous end joining (NHEJ)-mediated repair of DSBs, thereby facilitating HR. Desumoylated by SENP3. Post-translationally, ubiquitinated by MDM2, leading to its proteasome-dependent degradation. Ubiquitination is prevented by autoacetylation at Lys-275. Ubiquitinated following deacetylation by HDAC3, leading to cytoplasmic localization. Deubiquitinated by USP7 following interaction with ATF3, promoting its stabilization.

It is found in the nucleus. The protein localises to the chromosome. It localises to the cytoplasm. The protein resides in the centromere. Its subcellular location is the kinetochore. It is found in the cytoskeleton. The protein localises to the spindle pole. It localises to the nucleolus. The protein resides in the perinuclear region. The catalysed reaction is L-lysyl-[histone] + acetyl-CoA = N(6)-acetyl-L-lysyl-[histone] + CoA + H(+). It carries out the reaction L-lysyl-[protein] + acetyl-CoA = N(6)-acetyl-L-lysyl-[protein] + CoA + H(+). The enzyme catalyses (2E)-butenoyl-CoA + L-lysyl-[protein] = N(6)-(2E)-butenoyl-L-lysyl-[protein] + CoA + H(+). It catalyses the reaction 2-hydroxyisobutanoyl-CoA + L-lysyl-[protein] = N(6)-(2-hydroxyisobutanoyl)-L-lysyl-[protein] + CoA + H(+). The catalysed reaction is (S)-lactoyl-CoA + L-lysyl-[protein] = N(6)-[(S)-lactoyl]-L-lysyl-[protein] + CoA + H(+). Its activity is regulated as follows. Acyltransferase and acetyltransferase activities are activated by phosphorylation and autoacetylation. Autoacetylation activates the histone acetyltransferase activity. Its function is as follows. Catalytic subunit of the NuA4 histone acetyltransferase complex, a multiprotein complex involved in transcriptional activation of select genes principally by acetylation of nucleosomal histones H2A and H4. Histone acetylation alters nucleosome-DNA interactions and promotes interaction of the modified histones with other proteins which positively regulate transcription. The NuA4 histone acetyltransferase complex is required for the activation of transcriptional programs associated with proto-oncogene mediated growth induction, tumor suppressor mediated growth arrest and replicative senescence, apoptosis, and DNA repair. The NuA4 complex plays a direct role in repair of DNA double-strand breaks (DSBs) by promoting homologous recombination (HR): the complex inhibits TP53BP1 binding to chromatin via MBTD1, which recognizes and binds histone H4 trimethylated at 'Lys-20' (H4K20me), and KAT5 that catalyzes acetylation of 'Lys-15' of histone H2A (H2AK15ac), thereby blocking the ubiquitination mark required for TP53BP1 localization at DNA breaks. Also involved in DSB repair by mediating acetylation of 'Lys-5' of histone H2AX (H2AXK5ac), promoting NBN/NBS1 assembly at the sites of DNA damage. The NuA4 complex plays a key role in hematopoietic stem cell maintenance and is required to maintain acetylated H2A.Z/H2AZ1 at MYC target genes. The NuA4 complex is also required for spermatid development by promoting acetylation of histones: histone hyperacetylation is required for histone replacement during the transition from round to elongating spermatids. Component of a SWR1-like complex that specifically mediates the removal of histone H2A.Z/H2AZ1 from the nucleosome. Also acetylates non-histone proteins, such as BMAL1, ATM, AURKB, CHKA, CGAS, ERCC4/XPF, LPIN1, TP53/p53, NDC80/HEC1, NR1D2, RAN, SOX4, FOXP3, SQSTM1, ULK1 and RUBCNL/Pacer. Directly acetylates and activates ATM. Promotes nucleotide excision repair (NER) by mediating acetylation of ERCC4/XPF, thereby promoting formation of the ERCC4-ERCC1 complex. Relieves NR1D2-mediated inhibition of APOC3 expression by acetylating NR1D2. Acts as a regulator of regulatory T-cells (Treg) by catalyzing FOXP3 acetylation, thereby promoting FOXP3 transcriptional repressor activity. Involved in skeletal myoblast differentiation by mediating acetylation of SOX4. Catalyzes acetylation of APBB1/FE65, increasing its transcription activator activity. Promotes transcription elongation during the activation phase of the circadian cycle by catalyzing acetylation of BMAL1, promoting elongation of circadian transcripts. Together with GSK3 (GSK3A or GSK3B), acts as a regulator of autophagy: phosphorylated at Ser-86 by GSK3 under starvation conditions, leading to activate acetyltransferase activity and promote acetylation of key autophagy regulators, such as ULK1 and RUBCNL/Pacer. Acts as a regulator of the cGAS-STING innate antiviral response by catalyzing acetylation the N-terminus of CGAS, thereby promoting CGAS DNA-binding and activation. Also regulates lipid metabolism by mediating acetylation of CHKA or LPIN1. Promotes lipolysis of lipid droplets following glucose deprivation by mediating acetylation of isoform 1 of CHKA, thereby promoting monomerization of CHKA and its conversion into a tyrosine-protein kinase. Acts as a regulator of fatty-acid-induced triacylglycerol synthesis by catalyzing acetylation of LPIN1, thereby promoting the synthesis of diacylglycerol. In addition to protein acetyltransferase, can use different acyl-CoA substrates, such as (2E)-butenoyl-CoA (crotonyl-CoA), S-lactoyl-CoA (lactyl-CoA) and 2-hydroxyisobutanoyl-CoA (2-hydroxyisobutyryl-CoA), and is able to mediate protein crotonylation, lactylation and 2-hydroxyisobutyrylation, respectively. Acts as a key regulator of chromosome segregation and kinetochore-microtubule attachment during mitosis by mediating acetylation or crotonylation of target proteins. Catalyzes acetylation of AURKB at kinetochores, increasing AURKB activity and promoting accurate chromosome segregation in mitosis. Acetylates RAN during mitosis, promoting microtubule assembly at mitotic chromosomes. Acetylates NDC80/HEC1 during mitosis, promoting robust kinetochore-microtubule attachment. Catalyzes crotonylation of MAPRE1/EB1, thereby ensuring accurate spindle positioning in mitosis. Catalyzes lactylation of NBN/NBS1 in response to DNA damage, thereby promoting DNA double-strand breaks (DSBs) via homologous recombination (HR). The protein is Histone acetyltransferase KAT5 of Pongo abelii (Sumatran orangutan).